We begin with the raw amino-acid sequence, 549 residues long: E-selectin (549 aa).

Residues 1-21 (MNASCFLSALTFVLLIGKSIA) form the signal peptide. Positions 22 to 139 (WYYNASSELM…CDKKKLALCY (118 aa)) constitute a C-type lectin domain. At 22–494 (WYYNASSELM…CEAPANPPRP (473 aa)) the chain is on the extracellular side. N-linked (GlcNAc...) asparagine glycosylation is found at Asn25 and Asn60. Cystine bridges form between Cys40–Cys138, Cys111–Cys130, Cys143–Cys154, Cys148–Cys163, Cys165–Cys174, Cys180–Cys225, Cys193–Cys206, Cys210–Cys238, Cys243–Cys287, Cys256–Cys269, Cys273–Cys300, Cys305–Cys350, Cys336–Cys363, Cys368–Cys413, Cys399–Cys426, Cys431–Cys472, and Cys458–Cys485. Ca(2+) contacts are provided by Glu101, Asn103, and Glu109. A carbohydrate-binding positions include 101–109 (EPNNKQRNE), 113–118 (EIYIQR), and 126–128 (NDE). Residues Asn126 and Asp127 each coordinate Ca(2+). Positions 140–175 (TASCTNTSCSGHGECVETINSYTCKCHPGFLGPKCD) constitute an EGF-like domain. Asn145 is a glycosylation site (N-linked (GlcNAc...) asparagine). Sushi domains lie at 178 to 240 (VTCQ…ACHV), 241 to 302 (VECK…SCKA), 303 to 365 (VTCD…VCKA), 366 to 428 (SQCE…TCAG), and 429 to 487 (VQCS…TCEA). Asn192 and Asn203 each carry an N-linked (GlcNAc...) asparagine glycan. N-linked (GlcNAc...) asparagine glycosylation occurs at Asn266. Asn313, Asn320, and Asn333 each carry an N-linked (GlcNAc...) asparagine glycan. Asn441 and Asn465 each carry an N-linked (GlcNAc...) asparagine glycan. A helical membrane pass occupies residues 495-516 (LVVALSVAATSLLTLSSLIYVL). At 517-549 (KRFFWKKAKKFVPASSCQSLQSFENYQGPSYII) the chain is on the cytoplasmic side.

It belongs to the selectin/LECAM family. As to quaternary structure, interacts with SELPLG/PSGL1 and PODXL2 through the sialyl Lewis X epitope. SELPLG sulfation appears not to be required for this interaction.

Its subcellular location is the cell membrane. Its function is as follows. Cell-surface glycoprotein having a role in immunoadhesion. Mediates in the adhesion of blood neutrophils in cytokine-activated endothelium through interaction with SELPLG/PSGL1. May have a role in capillary morphogenesis. In Rattus norvegicus (Rat), this protein is E-selectin (Sele).